Here is a 174-residue protein sequence, read N- to C-terminus: Small ribosomal subunit protein uS5 (174 aa).

In terms of domain architecture, S5 DRBM spans 19-82 (LREKMIAINR…EEARRNMTKI (64 aa)).

It belongs to the universal ribosomal protein uS5 family. As to quaternary structure, part of the 30S ribosomal subunit. Contacts proteins S4 and S8.

With S4 and S12 plays an important role in translational accuracy. Its function is as follows. Located at the back of the 30S subunit body where it stabilizes the conformation of the head with respect to the body. In Albidiferax ferrireducens (strain ATCC BAA-621 / DSM 15236 / T118) (Rhodoferax ferrireducens), this protein is Small ribosomal subunit protein uS5.